Reading from the N-terminus, the 60-residue chain is Large ribosomal subunit protein uL30 (60 aa).

This sequence belongs to the universal ribosomal protein uL30 family. In terms of assembly, part of the 50S ribosomal subunit.

This Burkholderia ambifaria (strain MC40-6) protein is Large ribosomal subunit protein uL30.